A 164-amino-acid chain; its full sequence is Protein-export protein SecB (164 aa).

Belongs to the SecB family. As to quaternary structure, homotetramer, a dimer of dimers. One homotetramer interacts with 1 SecA dimer.

The protein resides in the cytoplasm. Its function is as follows. One of the proteins required for the normal export of preproteins out of the cell cytoplasm. It is a molecular chaperone that binds to a subset of precursor proteins, maintaining them in a translocation-competent state. It also specifically binds to its receptor SecA. The polypeptide is Protein-export protein SecB (Shewanella denitrificans (strain OS217 / ATCC BAA-1090 / DSM 15013)).